The chain runs to 518 residues: Bifunctional purine biosynthesis protein PurH (518 aa).

An MGS-like domain is found at 1–146; sequence MSPIALLSVS…KNHQDVLVVT (146 aa).

Belongs to the PurH family.

It carries out the reaction (6R)-10-formyltetrahydrofolate + 5-amino-1-(5-phospho-beta-D-ribosyl)imidazole-4-carboxamide = 5-formamido-1-(5-phospho-D-ribosyl)imidazole-4-carboxamide + (6S)-5,6,7,8-tetrahydrofolate. It catalyses the reaction IMP + H2O = 5-formamido-1-(5-phospho-D-ribosyl)imidazole-4-carboxamide. Its pathway is purine metabolism; IMP biosynthesis via de novo pathway; 5-formamido-1-(5-phospho-D-ribosyl)imidazole-4-carboxamide from 5-amino-1-(5-phospho-D-ribosyl)imidazole-4-carboxamide (10-formyl THF route): step 1/1. It functions in the pathway purine metabolism; IMP biosynthesis via de novo pathway; IMP from 5-formamido-1-(5-phospho-D-ribosyl)imidazole-4-carboxamide: step 1/1. This is Bifunctional purine biosynthesis protein PurH from Prochlorococcus marinus (strain NATL1A).